The chain runs to 294 residues: Elongation factor Ts (294 aa).

Residues 80–83 (TDFV) are involved in Mg(2+) ion dislocation from EF-Tu.

The protein belongs to the EF-Ts family.

The protein resides in the cytoplasm. In terms of biological role, associates with the EF-Tu.GDP complex and induces the exchange of GDP to GTP. It remains bound to the aminoacyl-tRNA.EF-Tu.GTP complex up to the GTP hydrolysis stage on the ribosome. This chain is Elongation factor Ts, found in Listeria monocytogenes serotype 4b (strain CLIP80459).